Reading from the N-terminus, the 4011-residue chain is Hybrid PKS-NRPS synthetase mycA (4011 aa).

The Ketosynthase family 3 (KS3) domain maps to Asn12 to Asn451. Residues Cys185, His324, and His373 each act as for beta-ketoacyl synthase activity in the active site. An acyl transferase (AT) domain region spans residues Val576–Ser903. An N-terminal hotdog fold region spans residues Asn977–Thr1113. The region spanning Asn977–Gln1290 is the PKS/mFAS DH domain. Residues Pro978–Arg1287 form a dehydratase (DH) domain region. Residue His1009 is the Proton acceptor; for dehydratase activity of the active site. The interval Thr1135–Gln1290 is C-terminal hotdog fold. The active-site Proton donor; for dehydratase activity is the Asp1195. A methyltransferase (MT) domain region spans residues Tyr1434 to Glu1626. The ketoreductase (KR)domain stretch occupies residues Thr2138–Val2311. The Carrier 1 domain maps to Asp2429 to Leu2504. Ser2464 carries the O-(pantetheine 4'-phosphoryl)serine modification. A disordered region spans residues Ala2519–Ala2607. Positions Pro2559–Thr2578 are enriched in polar residues. Residues Glu2604–Pro2975 form a condensation region. Residues Ile3009 to Asp3414 form an adenylation region. Positions Ala3525–Gln3544 are disordered. The segment covering Asn3535–Gln3544 has biased composition (polar residues). One can recognise a Carrier 2 domain in the interval Pro3541 to Ala3621. Position 3581 is an O-(pantetheine 4'-phosphoryl)serine (Ser3581). A reductase-like region spans residues Val3671 to Glu3978.

The protein in the C-terminal section; belongs to the NRP synthetase family.

The catalysed reaction is L-leucine + 8 malonyl-CoA + 4 S-adenosyl-L-methionine + ATP + 9 NADPH + 12 H(+) = (5S)-5-(2-methylpropyl)-3-[(2E,6R,8E,10E,12E)-6,8,10,12-tetramethyltetradeca-2,8,10,12-tetraenoyl]-2,5-dihydro-1H-pyrrol-2-one + AMP + 4 S-adenosyl-L-homocysteine + 8 CO2 + diphosphate + 9 NADP(+) + 8 CoA + 7 H2O. It functions in the pathway mycotoxin biosynthesis. In terms of biological role, hybrid PKS-NRPS synthetase; part of the gene cluster that mediates the biosynthesis of myceliothermophins, mycotoxins that contain a trans-fused decalin ring system connected to a conjugated 3-pyrrolin-2-one moiety and that have potential anti-tumor properties. The polyketide synthase module (PKS) of the PKS-NRPS mycA is responsible for the synthesis of the octaketide backbone. The downstream nonribosomal peptide synthetase (NRPS) module then amidates the carboxyl end of the octaketide with a leucine. A reductase-like domain (R) at the C-terminus catalyzes the reductive release of the polyketide-amino acid intermediate. Because mycA lacks a designated enoylreductase (ER) domain, the required activity is provided the enoyl reductase mycC. Following mycA-catalyzed construction and release of aminoacyl polyketide aldehyde, Knoevenagel condensation yields the expected ketone. This C18 keto acyclic precursor is the substrate of the Diels-Alderase mycB, that catalyzes the Diels-Alder cycloaddition to produce myceliothermophin E. A yet unknown oxygenase involved in the production of myceliothermophin A, via substitution with a hydroxyl group at the C21, has still to be identified. In Thermothelomyces thermophilus (strain ATCC 42464 / BCRC 31852 / DSM 1799) (Sporotrichum thermophile), this protein is Hybrid PKS-NRPS synthetase mycA.